A 349-amino-acid polypeptide reads, in one-letter code: Bifunctional protein FolKE (349 aa).

Residues 1 to 226 (MQTTYLSMGS…LFEIDSSKND (226 aa)) form a 2-amino-4-hydroxy-6-hydroxymethyldihydropteridine pyrophosphokinase region. The GTP cyclohydrolase 1 stretch occupies residues 226–349 (DSIVLIKDIP…KRMEFLESLL (124 aa)).

This sequence in the N-terminal section; belongs to the HPPK family. The protein in the C-terminal section; belongs to the GTP cyclohydrolase I family. In terms of assembly, homomer.

It catalyses the reaction 6-hydroxymethyl-7,8-dihydropterin + ATP = (7,8-dihydropterin-6-yl)methyl diphosphate + AMP + H(+). It carries out the reaction GTP + H2O = 7,8-dihydroneopterin 3'-triphosphate + formate + H(+). The protein operates within cofactor biosynthesis; 7,8-dihydroneopterin triphosphate biosynthesis; 7,8-dihydroneopterin triphosphate from GTP: step 1/1. It participates in cofactor biosynthesis; tetrahydrofolate biosynthesis; 2-amino-4-hydroxy-6-hydroxymethyl-7,8-dihydropteridine diphosphate from 7,8-dihydroneopterin triphosphate: step 4/4. In Lactococcus lactis subsp. cremoris (strain MG1363), this protein is Bifunctional protein FolKE (folKE).